A 212-amino-acid chain; its full sequence is Ras-related protein Rab-15 (212 aa).

Positions 17, 18, 19, 20, 21, 22, 23, 35, 39, and 40 each coordinate GTP. T22 is a binding site for Mg(2+). 2 short sequence motifs (switch) span residues 31-45 and 63-80; these read NEFH…GVDF and DTAG…YYRR. Mg(2+) contacts are provided by T40 and D63. GTP contacts are provided by G66, N121, K122, D124, S151, and A152. Residues 193–212 form a disordered region; that stretch reads LEEEEGKPEGPANSSKTCWC. Residues C210 and C212 are each lipidated (S-geranylgeranyl cysteine). Position 212 is a cysteine methyl ester (C212).

It belongs to the small GTPase superfamily. Rab family. In terms of assembly, the GTP bound form of RAB15 interacts with REP15. Interacts (GTP-bound form) with MICAL1, MICAL3, MICALCL, EHBP1 and EHBP1L1. Requires Mg(2+) as cofactor.

It localises to the cell membrane. It carries out the reaction GTP + H2O = GDP + phosphate + H(+). Regulated by guanine nucleotide exchange factors (GEFs) which promote the exchange of bound GDP for free GTP. Regulated by GTPase activating proteins (GAPs) which increase the GTP hydrolysis activity. Inhibited by GDP dissociation inhibitors (GDIs). The small GTPases Rab are key regulators of intracellular membrane trafficking, from the formation of transport vesicles to their fusion with membranes. Rabs cycle between an inactive GDP-bound form and an active GTP-bound form that is able to recruit to membranes different sets of downstream effectors directly responsible for vesicle formation, movement, tethering and fusion. RAB15 may act in concert with RAB3A in regulating aspects of synaptic vesicle membrane flow within the nerve terminal. The protein is Ras-related protein Rab-15 of Homo sapiens (Human).